A 125-amino-acid polypeptide reads, in one-letter code: Large ribosomal subunit protein bL12 (125 aa).

The protein belongs to the bacterial ribosomal protein bL12 family. In terms of assembly, homodimer. Part of the ribosomal stalk of the 50S ribosomal subunit. Forms a multimeric L10(L12)X complex, where L10 forms an elongated spine to which 2 to 4 L12 dimers bind in a sequential fashion. Binds GTP-bound translation factors.

Forms part of the ribosomal stalk which helps the ribosome interact with GTP-bound translation factors. Is thus essential for accurate translation. In Thermoanaerobacter pseudethanolicus (strain ATCC 33223 / 39E) (Clostridium thermohydrosulfuricum), this protein is Large ribosomal subunit protein bL12.